The primary structure comprises 666 residues: NADH-ubiquinone oxidoreductase chain 5 (666 aa).

The next 17 membrane-spanning stretches (helical) occupy residues 3–23 (LLILFLPLLGSLISGFGGRWL), 31–51 (FSTLCVVVSSLFSLLAFFEIG), 59–78 (IFLVSWIKSGAFYVSWGFLF), 82–101 (TVTMLVVITLVSSLVHIYSI), 119–139 (IFTFFMLILVTADNLIQMFLG), 168–190 (LIVNRVGDFGLSLGIFLIFWVFN), 211–231 (FLGFKLHVLTLISLFLFIGAI), 251–271 (TPVSALIHAATMVTAGVFLMI), 283–303 (ILFILITFGSLTAFFAAVTGV), 311–333 (VIAYSTCSQLGYMIFSCGMSCYD), 337–357 (FHLANHAFFKALLFLSAGSVI), 375–395 (FMPLTYSVMLIGTLALIGFPF), 421–441 (YISFACWLGTMSVFFTSFYSF), 467–487 (LLMIFPLIILSIGSIFAGYLI), 524–544 (WLPFILSLLGIFFASFVQIFL), 572–594 (VLYNRLIVLPILNFGYSISFKIL), and 629–649 (YLFFMIFTFCSFSIILVYSYI).

It belongs to the complex I subunit 5 family.

The protein localises to the mitochondrion inner membrane. The catalysed reaction is a ubiquinone + NADH + 5 H(+)(in) = a ubiquinol + NAD(+) + 4 H(+)(out). Core subunit of the mitochondrial membrane respiratory chain NADH dehydrogenase (Complex I) that is believed to belong to the minimal assembly required for catalysis. Complex I functions in the transfer of electrons from NADH to the respiratory chain. The immediate electron acceptor for the enzyme is believed to be ubiquinone. The polypeptide is NADH-ubiquinone oxidoreductase chain 5 (ND5) (Chondrus crispus (Carrageen Irish moss)).